A 229-amino-acid polypeptide reads, in one-letter code: ATP synthase subunit a (229 aa).

6 helical membrane-spanning segments follow: residues 25 to 45, 82 to 102, 104 to 124, 142 to 162, 181 to 201, and 202 to 222; these read ADAV…SIAA, FFPL…IGLI, GFFP…VVFV, FLGP…IGHL, LVLI…MMLM, and GVLV…IYIQ.

Belongs to the ATPase A chain family. F-type ATPases have 2 components, CF(1) - the catalytic core - and CF(0) - the membrane proton channel. CF(1) has five subunits: alpha(3), beta(3), gamma(1), delta(1), epsilon(1). CF(0) has three main subunits: a(1), b(2) and c(9-12). The alpha and beta chains form an alternating ring which encloses part of the gamma chain. CF(1) is attached to CF(0) by a central stalk formed by the gamma and epsilon chains, while a peripheral stalk is formed by the delta and b chains.

The protein resides in the cell inner membrane. Its function is as follows. Key component of the proton channel; it plays a direct role in the translocation of protons across the membrane. The polypeptide is ATP synthase subunit a (Geobacter sp. (strain M21)).